The sequence spans 543 residues: tRNA (guanine(37)-N(1))-methyltransferase (543 aa).

Residues 1–59 (MLKSLCFVIRPAIVSRPQFRLPTIARLSLRQFQNQPQSVGFFTMAPLETRALALSPSAT) constitute a mitochondrion transit peptide. S-adenosyl-L-methionine-binding positions include His282, 320 to 321 (DL), and 348 to 349 (DG). A disordered region spans residues 366–405 (DPAPPPKVSNRQRDREAKEARRKREQAKAAGQPVTETAPM). Asn431 is an S-adenosyl-L-methionine binding site.

Belongs to the class I-like SAM-binding methyltransferase superfamily. TRM5/TYW2 family. Monomer.

It is found in the mitochondrion matrix. The protein resides in the nucleus. It localises to the cytoplasm. The enzyme catalyses guanosine(37) in tRNA + S-adenosyl-L-methionine = N(1)-methylguanosine(37) in tRNA + S-adenosyl-L-homocysteine + H(+). Its function is as follows. Specifically methylates the N1 position of guanosine-37 in various cytoplasmic and mitochondrial tRNAs. Methylation is not dependent on the nature of the nucleoside 5' of the target nucleoside. This is the first step in the biosynthesis of wybutosine (yW), a modified base adjacent to the anticodon of tRNAs and required for accurate decoding. The chain is tRNA (guanine(37)-N(1))-methyltransferase from Cryptococcus neoformans var. neoformans serotype D (strain JEC21 / ATCC MYA-565) (Filobasidiella neoformans).